A 329-amino-acid polypeptide reads, in one-letter code: Tryptophan--tRNA ligase (329 aa).

ATP contacts are provided by residues 9–11 and 17–18; these read QPS and GN. The 'HIGH' region motif lies at 10 to 18; sequence PSGIPTIGN. Asp133 lines the L-tryptophan pocket. Residues 145–147, Val184, and 193–197 each bind ATP; these read GDD and KMSKS. The 'KMSKS' region signature appears at 193-197; that stretch reads KMSKS.

Belongs to the class-I aminoacyl-tRNA synthetase family. Homodimer.

It is found in the cytoplasm. It carries out the reaction tRNA(Trp) + L-tryptophan + ATP = L-tryptophyl-tRNA(Trp) + AMP + diphosphate + H(+). Its function is as follows. Catalyzes the attachment of tryptophan to tRNA(Trp). This Staphylococcus aureus (strain MRSA252) protein is Tryptophan--tRNA ligase.